The sequence spans 208 residues: ATP phosphoribosyltransferase (208 aa).

It belongs to the ATP phosphoribosyltransferase family. Short subfamily. As to quaternary structure, heteromultimer composed of HisG and HisZ subunits.

Its subcellular location is the cytoplasm. The catalysed reaction is 1-(5-phospho-beta-D-ribosyl)-ATP + diphosphate = 5-phospho-alpha-D-ribose 1-diphosphate + ATP. Its pathway is amino-acid biosynthesis; L-histidine biosynthesis; L-histidine from 5-phospho-alpha-D-ribose 1-diphosphate: step 1/9. Its function is as follows. Catalyzes the condensation of ATP and 5-phosphoribose 1-diphosphate to form N'-(5'-phosphoribosyl)-ATP (PR-ATP). Has a crucial role in the pathway because the rate of histidine biosynthesis seems to be controlled primarily by regulation of HisG enzymatic activity. The protein is ATP phosphoribosyltransferase of Clostridioides difficile (strain 630) (Peptoclostridium difficile).